Consider the following 399-residue polypeptide: UDP-N-acetylglucosamine--N-acetylmuramyl-(pentapeptide) pyrophosphoryl-undecaprenol N-acetylglucosamine transferase (399 aa).

Positions 1 to 21 (MTSRFGHSHHPRRGRSARARA) are enriched in basic residues. A disordered region spans residues 1–30 (MTSRFGHSHHPRRGRSARARAGRREGVQSN). Residues 58 to 60 (TGG), N170, R206, S234, I288, and Q333 each bind UDP-N-acetyl-alpha-D-glucosamine.

Belongs to the glycosyltransferase 28 family. MurG subfamily.

The protein localises to the cell inner membrane. The enzyme catalyses di-trans,octa-cis-undecaprenyl diphospho-N-acetyl-alpha-D-muramoyl-L-alanyl-D-glutamyl-meso-2,6-diaminopimeloyl-D-alanyl-D-alanine + UDP-N-acetyl-alpha-D-glucosamine = di-trans,octa-cis-undecaprenyl diphospho-[N-acetyl-alpha-D-glucosaminyl-(1-&gt;4)]-N-acetyl-alpha-D-muramoyl-L-alanyl-D-glutamyl-meso-2,6-diaminopimeloyl-D-alanyl-D-alanine + UDP + H(+). The protein operates within cell wall biogenesis; peptidoglycan biosynthesis. Functionally, cell wall formation. Catalyzes the transfer of a GlcNAc subunit on undecaprenyl-pyrophosphoryl-MurNAc-pentapeptide (lipid intermediate I) to form undecaprenyl-pyrophosphoryl-MurNAc-(pentapeptide)GlcNAc (lipid intermediate II). The protein is UDP-N-acetylglucosamine--N-acetylmuramyl-(pentapeptide) pyrophosphoryl-undecaprenol N-acetylglucosamine transferase of Acidovorax ebreus (strain TPSY) (Diaphorobacter sp. (strain TPSY)).